Consider the following 137-residue polypeptide: Small ribosomal subunit protein uS12 (137 aa).

2 disordered regions span residues 1–21 and 34–57; these read MPTINQLVRKPRKSKVEKSDS and VHTKLAAPQKRGVATRVGTMTPKK.

It belongs to the universal ribosomal protein uS12 family. Part of the 30S ribosomal subunit. Contacts proteins S8 and S17. May interact with IF1 in the 30S initiation complex.

With S4 and S5 plays an important role in translational accuracy. In terms of biological role, interacts with and stabilizes bases of the 16S rRNA that are involved in tRNA selection in the A site and with the mRNA backbone. Located at the interface of the 30S and 50S subunits, it traverses the body of the 30S subunit contacting proteins on the other side and probably holding the rRNA structure together. The combined cluster of proteins S8, S12 and S17 appears to hold together the shoulder and platform of the 30S subunit. The polypeptide is Small ribosomal subunit protein uS12 (Streptococcus mutans serotype c (strain ATCC 700610 / UA159)).